Consider the following 485-residue polypeptide: Glutamyl-tRNA(Gln) amidotransferase subunit A (485 aa).

Residues K78 and S153 each act as charge relay system in the active site. The active-site Acyl-ester intermediate is S177.

This sequence belongs to the amidase family. GatA subfamily. In terms of assembly, heterotrimer of A, B and C subunits.

The catalysed reaction is L-glutamyl-tRNA(Gln) + L-glutamine + ATP + H2O = L-glutaminyl-tRNA(Gln) + L-glutamate + ADP + phosphate + H(+). In terms of biological role, allows the formation of correctly charged Gln-tRNA(Gln) through the transamidation of misacylated Glu-tRNA(Gln) in organisms which lack glutaminyl-tRNA synthetase. The reaction takes place in the presence of glutamine and ATP through an activated gamma-phospho-Glu-tRNA(Gln). This chain is Glutamyl-tRNA(Gln) amidotransferase subunit A, found in Bacillus cereus (strain ZK / E33L).